Reading from the N-terminus, the 319-residue chain is Beta-ketoacyl-[acyl-carrier-protein] synthase III (319 aa).

Residues cysteine 115 and histidine 246 contribute to the active site. Residues 247–251 (QANLR) form an ACP-binding region. Asparagine 276 is an active-site residue.

It belongs to the thiolase-like superfamily. FabH family. As to quaternary structure, homodimer.

It localises to the cytoplasm. It carries out the reaction malonyl-[ACP] + acetyl-CoA + H(+) = 3-oxobutanoyl-[ACP] + CO2 + CoA. Its pathway is lipid metabolism; fatty acid biosynthesis. In terms of biological role, catalyzes the condensation reaction of fatty acid synthesis by the addition to an acyl acceptor of two carbons from malonyl-ACP. Catalyzes the first condensation reaction which initiates fatty acid synthesis and may therefore play a role in governing the total rate of fatty acid production. Possesses both acetoacetyl-ACP synthase and acetyl transacylase activities. Its substrate specificity determines the biosynthesis of branched-chain and/or straight-chain of fatty acids. The sequence is that of Beta-ketoacyl-[acyl-carrier-protein] synthase III from Coxiella burnetii (strain CbuK_Q154) (Coxiella burnetii (strain Q154)).